Here is a 307-residue protein sequence, read N- to C-terminus: Probable 2-methylisocitrate lyase 2 (307 aa).

53 to 55 (SGA) contacts substrate. Mg(2+) contacts are provided by aspartate 92 and aspartate 94. Substrate is bound by residues 129–130 (CG), arginine 164, glutamate 194, 216–218 (NMT), arginine 247, and arginine 276.

This sequence belongs to the isocitrate lyase/PEP mutase superfamily. Methylisocitrate lyase family. As to quaternary structure, homotetramer; dimer of dimers. The cofactor is Mg(2+).

The enzyme catalyses (2S,3R)-3-hydroxybutane-1,2,3-tricarboxylate = pyruvate + succinate. It functions in the pathway organic acid metabolism; propanoate degradation. Involved in the catabolism of short chain fatty acids (SCFA) via the 2-methylcitrate cycle I (propionate degradation route). Catalyzes the thermodynamically favored C-C bond cleavage of (2R,3S)-2-methylisocitrate to yield pyruvate and succinate via an alpha-carboxy-carbanion intermediate. The protein is Probable 2-methylisocitrate lyase 2 of Corynebacterium glutamicum (strain ATCC 13032 / DSM 20300 / JCM 1318 / BCRC 11384 / CCUG 27702 / LMG 3730 / NBRC 12168 / NCIMB 10025 / NRRL B-2784 / 534).